A 211-amino-acid polypeptide reads, in one-letter code: Large ribosomal subunit protein uL4 (211 aa).

2 disordered regions span residues 1 to 28 (MAQAQVFDARTGRRSEMELKGPRFETEP) and 48 to 99 (TAST…GPRY). The span at 10 to 28 (RTGRRSEMELKGPRFETEP) shows a compositional bias: basic and acidic residues.

The protein belongs to the universal ribosomal protein uL4 family. Part of the 50S ribosomal subunit.

Functionally, one of the primary rRNA binding proteins, this protein initially binds near the 5'-end of the 23S rRNA. It is important during the early stages of 50S assembly. It makes multiple contacts with different domains of the 23S rRNA in the assembled 50S subunit and ribosome. In terms of biological role, forms part of the polypeptide exit tunnel. This is Large ribosomal subunit protein uL4 from Rubrobacter xylanophilus (strain DSM 9941 / JCM 11954 / NBRC 16129 / PRD-1).